A 126-amino-acid polypeptide reads, in one-letter code: UPF0047 protein AF_2050 (126 aa).

The protein belongs to the UPF0047 family.

The sequence is that of UPF0047 protein AF_2050 from Archaeoglobus fulgidus (strain ATCC 49558 / DSM 4304 / JCM 9628 / NBRC 100126 / VC-16).